We begin with the raw amino-acid sequence, 447 residues long: UPF0210 protein OEOE_0945 (447 aa).

The protein belongs to the UPF0210 family. As to quaternary structure, homodimer.

This chain is UPF0210 protein OEOE_0945, found in Oenococcus oeni (strain ATCC BAA-331 / PSU-1).